A 172-amino-acid chain; its full sequence is L-amino acid oxidase (172 aa).

FAD is bound at residue 44-47; the sequence is GPMR. Substrate is bound by residues Arg-47 and His-103.

It belongs to the flavin monoamine oxidase family. FIG1 subfamily. In terms of assembly, heterodimer; non-covalently linked. The cofactor is FAD. In terms of processing, N-glycosylated. In terms of tissue distribution, expressed by the venom gland.

It localises to the secreted. It catalyses the reaction an L-alpha-amino acid + O2 + H2O = a 2-oxocarboxylate + H2O2 + NH4(+). The catalysed reaction is L-leucine + O2 + H2O = 4-methyl-2-oxopentanoate + H2O2 + NH4(+). It carries out the reaction L-phenylalanine + O2 + H2O = 3-phenylpyruvate + H2O2 + NH4(+). The enzyme catalyses L-tryptophan + O2 + H2O = indole-3-pyruvate + H2O2 + NH4(+). It catalyses the reaction L-methionine + O2 + H2O = 4-methylsulfanyl-2-oxobutanoate + H2O2 + NH4(+). The catalysed reaction is L-isoleucine + O2 + H2O = (S)-3-methyl-2-oxopentanoate + H2O2 + NH4(+). It carries out the reaction L-arginine + O2 + H2O = 5-guanidino-2-oxopentanoate + H2O2 + NH4(+). The enzyme catalyses L-tyrosine + O2 + H2O = 3-(4-hydroxyphenyl)pyruvate + H2O2 + NH4(+). Its activity is regulated as follows. Activity is increased by Mn(2+) ions. Inhibited by Zn(2+), Ni(2+), Co(2+), Cu(2+) and Al(3+). No significant activity change by Na(+), K(+), Ca(2+), Mg(2+) and Ba(2+) ions. Both isoform are completely inhibited by L-Cys and reduced glutathione. O-phenanthroline, beta-mercaptoethanol and PMSF completely inhibit the enzymatic activity of LAAOII, but have no activity on LAAOI. Iodoacetic acid inhibits the enzymatic activity of LAAOII by 46% but has no effect on the LAAOI activity. Its function is as follows. Catalyzes an oxidative deamination of predominantly hydrophobic and aromatic L-amino acids, thus producing hydrogen peroxide that may contribute to the diverse toxic effects of this enzyme. Shows high specificity for L-Arg, L-Met, L-Phe, L-Leu, L-Tyr, L-Ile and L-Trp, low specificity for L-Val, L-Ala, L-Asn, L-Gln, and no specificity for L-Pro, L-Ser, L-Thr, L-Cys, L-Gly and L-Asp. Exhibits diverse biological activities, such as hemorrhage, hemolysis, edema, antibacterial and antiparasitic activities, as well as regulation of platelet aggregation. Its effect on platelets is controversial, since it either induces aggregation or inhibits agonist-induced aggregation. These different effects are probably due to different experimental conditions. This Cerastes cerastes (Horned desert viper) protein is L-amino acid oxidase.